The following is a 190-amino-acid chain: Protein GrpE (190 aa).

A compositionally biased stretch (polar residues) spans 1–31; the sequence is MTETPNTSSEEIQTSEPSSDNELQTLQQENA. A disordered region spans residues 1–34; it reads MTETPNTSSEEIQTSEPSSDNELQTLQQENANLK.

Belongs to the GrpE family. Homodimer.

The protein localises to the cytoplasm. Its function is as follows. Participates actively in the response to hyperosmotic and heat shock by preventing the aggregation of stress-denatured proteins, in association with DnaK and GrpE. It is the nucleotide exchange factor for DnaK and may function as a thermosensor. Unfolded proteins bind initially to DnaJ; upon interaction with the DnaJ-bound protein, DnaK hydrolyzes its bound ATP, resulting in the formation of a stable complex. GrpE releases ADP from DnaK; ATP binding to DnaK triggers the release of the substrate protein, thus completing the reaction cycle. Several rounds of ATP-dependent interactions between DnaJ, DnaK and GrpE are required for fully efficient folding. This Chlamydia muridarum (strain MoPn / Nigg) protein is Protein GrpE.